Here is a 1051-residue protein sequence, read N- to C-terminus: Integrin alpha-3 (1051 aa).

The N-terminal stretch at 1–32 (MGPGPRCAPGDPGWMLGALALMVAASGRFAFA) is a signal peptide. The Extracellular portion of the chain corresponds to 33 to 991 (FNLDTRFLVV…LVEELPAEIE (959 aa)). FG-GAP repeat units lie at residues 38–103 (RFLV…KDDC), 110–171 (EKSD…DLQL), 185–235 (CNSN…WDLS), 236–292 (EYSY…GGDL), 293–354 (KRKQ…TSFP), 356–411 (QPSL…GLLR), and 415–477 (QIVH…VARP). Asn86 is a glycosylation site (N-linked (GlcNAc...) asparagine). Cystine bridges form between Cys94–Cys103, Cys140–Cys162, and Cys185–Cys197. Ca(2+)-binding residues include Asp315, Asn317, Asp319, Asp323, Asp378, Asn380, Asp382, Asp386, Asp439, Asp441, Asn443, Tyr445, and Asp447. 2 cysteine pairs are disulfide-bonded: Cys485-Cys490 and Cys496-Cys550. Asn500, Asn511, Asn573, and Asn605 each carry an N-linked (GlcNAc...) asparagine glycan. Cys615 and Cys621 are joined by a disulfide. 3 N-linked (GlcNAc...) asparagine glycosylation sites follow: Asn656, Asn697, and Asn841. Cys694 and Cys702 are joined by a disulfide. Intrachain disulfides connect Cys846-Cys904 and Cys911-Cys916. The tract at residues 860–888 (LSDPGDKPHSPQRRRRQLDPGGDQGSPPV) is disordered. N-linked (GlcNAc...) asparagine glycans are attached at residues Asn923, Asn926, Asn935, and Asn969. A helical membrane pass occupies residues 992–1019 (LWLVLVAVSAGLLLLGLIIILLWKCGFF). Positions 1017-1021 (GFFKR) match the GFFKR motif motif. Residues 1020–1051 (KRARTRALYEAKRQKAEMKSQPSETERLTDDY) are Cytoplasmic-facing.

This sequence belongs to the integrin alpha chain family. Heterodimer of an alpha and a beta subunit. The alpha subunit is composed of a heavy and a light chain linked by a disulfide bond. Alpha-3 associates with beta-1. Interacts with HPS5. Interacts with FAP (seprase); the interaction occurs at the cell surface of invadopodia membrane in a collagen-dependent manner. Isoform 1, but not isoform 2, is phosphorylated on serine residues.

It localises to the cell membrane. It is found in the cell projection. Its subcellular location is the invadopodium membrane. The protein localises to the filopodium membrane. In terms of biological role, integrin alpha-3/beta-1 is a receptor for fibronectin, laminin, collagen, epiligrin, thrombospondin and CSPG4. Integrin alpha-3/beta-1 provides a docking site for FAP (seprase) at invadopodia plasma membranes in a collagen-dependent manner and hence may participate in the adhesion, formation of invadopodia and matrix degradation processes, promoting cell invasion. Alpha-3/beta-1 may mediate with LGALS3 the stimulation by CSPG4 of endothelial cells migration. The protein is Integrin alpha-3 (ITGA3) of Cricetulus griseus (Chinese hamster).